The chain runs to 257 residues: Global transcriptional regulator CodY (257 aa).

Residues 1–155 are GAF domain; it reads MSLLSKTREL…AATVIGMEIL (155 aa). A DNA-binding region (H-T-H motif) is located at residues 203-222; sequence ASKVADRVGITRSVIVNALR.

Belongs to the CodY family.

The protein localises to the cytoplasm. Functionally, DNA-binding global transcriptional regulator which is involved in the adaptive response to starvation and acts by directly or indirectly controlling the expression of numerous genes in response to nutrient availability. During rapid exponential growth, CodY is highly active and represses genes whose products allow adaptation to nutrient depletion. In Staphylococcus epidermidis (strain ATCC 12228 / FDA PCI 1200), this protein is Global transcriptional regulator CodY.